The primary structure comprises 284 residues: Ribosomal RNA small subunit methyltransferase A (284 aa).

6 residues coordinate S-adenosyl-L-methionine: Asn26, Leu28, Gly53, Glu74, Asp97, and Asn127.

This sequence belongs to the class I-like SAM-binding methyltransferase superfamily. rRNA adenine N(6)-methyltransferase family. RsmA subfamily.

The protein resides in the cytoplasm. The catalysed reaction is adenosine(1518)/adenosine(1519) in 16S rRNA + 4 S-adenosyl-L-methionine = N(6)-dimethyladenosine(1518)/N(6)-dimethyladenosine(1519) in 16S rRNA + 4 S-adenosyl-L-homocysteine + 4 H(+). Its function is as follows. Specifically dimethylates two adjacent adenosines (A1518 and A1519) in the loop of a conserved hairpin near the 3'-end of 16S rRNA in the 30S particle. May play a critical role in biogenesis of 30S subunits. The chain is Ribosomal RNA small subunit methyltransferase A from Anaeromyxobacter dehalogenans (strain 2CP-1 / ATCC BAA-258).